A 494-amino-acid polypeptide reads, in one-letter code: Cysteine--tRNA ligase (494 aa).

A Zn(2+)-binding site is contributed by C29. The 'HIGH' region signature appears at 31–41; it reads VTVYDYCHLGH. Zn(2+)-binding residues include C216, H241, and E245. A 'KMSKS' region motif is present at residues 273–277; sequence KMSKS. K276 serves as a coordination point for ATP.

This sequence belongs to the class-I aminoacyl-tRNA synthetase family. Monomer. Requires Zn(2+) as cofactor.

The protein resides in the cytoplasm. The enzyme catalyses tRNA(Cys) + L-cysteine + ATP = L-cysteinyl-tRNA(Cys) + AMP + diphosphate. The polypeptide is Cysteine--tRNA ligase (Cyanothece sp. (strain PCC 7425 / ATCC 29141)).